Consider the following 1016-residue polypeptide: FHIP family protein Bm1_18400 (1016 aa).

Disordered regions lie at residues 586–608 (DSLR…RSSF) and 757–778 (SDGF…PLGK).

It belongs to the FHIP family.

The protein is FHIP family protein Bm1_18400 of Brugia malayi (Filarial nematode worm).